The sequence spans 529 residues: Peptide chain release factor 3 (529 aa).

One can recognise a tr-type G domain in the interval 11 to 280 (KKRRTFAIIS…GLVEWAPAPL (270 aa)). Residues 20-27 (SHPDAGKT), 88-92 (DTPGH), and 142-145 (NKLD) each bind GTP.

The protein belongs to the TRAFAC class translation factor GTPase superfamily. Classic translation factor GTPase family. PrfC subfamily.

It is found in the cytoplasm. Increases the formation of ribosomal termination complexes and stimulates activities of RF-1 and RF-2. It binds guanine nucleotides and has strong preference for UGA stop codons. It may interact directly with the ribosome. The stimulation of RF-1 and RF-2 is significantly reduced by GTP and GDP, but not by GMP. This chain is Peptide chain release factor 3, found in Alteromonas mediterranea (strain DSM 17117 / CIP 110805 / LMG 28347 / Deep ecotype).